The sequence spans 359 residues: Probable C-C chemokine receptor type 3 (359 aa).

The Extracellular portion of the chain corresponds to 1–38 (MAFNTDEIKTVVESFETTPYEYEWAPPCEKVRIKELGS). Residues 39–64 (WLLPPLYSLVFIIGLLGNMMVVLILI) form a helical membrane-spanning segment. At 65-68 (KYRK) the chain is on the cytoplasmic side. Residues 69 to 95 (LQIMTNIYLFNLAISDLLFLFTVPFWI) traverse the membrane as a helical segment. The Extracellular portion of the chain corresponds to 96–111 (HYVLWNEWGFGHYMCK). C110 and C187 are oxidised to a cystine. The helical transmembrane segment at 112-133 (MLSGFYYLALYSEIFFIILLTI) threads the bilayer. Residues 134–150 (DRYLAIVHAVFALRART) are Cytoplasmic-facing. The chain crosses the membrane as a helical span at residues 151–175 (VTFATITSIITWGLAGLAALPEFIF). The Extracellular portion of the chain corresponds to 176–201 (HESQDSFGEFSCSPRYPEGEEDSWKR). The helical transmembrane segment at 202 to 227 (FHALRMNIFGLALPLLIMVICYSGII) threads the bilayer. The Cytoplasmic portion of the chain corresponds to 228–243 (KTLLRCPNKKKHKAIR). A helical transmembrane segment spans residues 244 to 268 (LIFVVMIVFFIFWTPYNLVLLFSAF). At 269-285 (HSTFLETSCQQSKHLDL) the chain is on the extracellular side. The chain crosses the membrane as a helical span at residues 286 to 309 (AMQVTEVIAYTHCCINPVIYAFVG). The Cytoplasmic segment spans residues 310–359 (ERFRKHLRLFFHRNVAVYLGKYIPFLPGEKMERTSSVSPSTGEQEISVVF).

It belongs to the G-protein coupled receptor 1 family. As to expression, detected in skeletal muscle and in trace amounts in leukocytes.

The protein resides in the cell membrane. Receptor for C-C type chemokine. Binds and responds to a variety of chemokines, including CCL11, CCL26, CCL7, CCL13, RANTES(CCL5) and CCL15. Subsequently transduces a signal by increasing the intracellular calcium ions level. In addition acts as a possible functional receptor for NARS1. This Mus musculus (Mouse) protein is Probable C-C chemokine receptor type 3 (Ccr3).